Here is a 304-residue protein sequence, read N- to C-terminus: dTDP-4-dehydrorhamnose reductase (304 aa).

Residues 15 to 17 (GQL), 41 to 42 (DI), and 63 to 65 (AYT) contribute to the NADH site. NADPH is bound by residues 16 to 17 (QL), 41 to 42 (DI), and 63 to 65 (AYT). 104 to 105 (TD) provides a ligand contact to dTDP-beta-L-rhamnose. NADH is bound by residues tyrosine 132 and lysine 136. Residues tyrosine 132 and lysine 136 each contribute to the NADPH site. Tyrosine 132 (proton donor/acceptor) is an active-site residue. A dTDP-beta-L-rhamnose-binding site is contributed by tryptophan 157.

Belongs to the dTDP-4-dehydrorhamnose reductase family. Mg(2+) is required as a cofactor.

It catalyses the reaction dTDP-beta-L-rhamnose + NADP(+) = dTDP-4-dehydro-beta-L-rhamnose + NADPH + H(+). It participates in carbohydrate biosynthesis; dTDP-L-rhamnose biosynthesis. In terms of biological role, involved in the biosynthesis of the dTDP-L-rhamnose which is a component of the critical linker, D-N-acetylglucosamine-L-rhamnose disaccharide, which connects the galactan region of arabinogalactan to peptidoglycan via a phosphodiester linkage. Catalyzes the reduction of dTDP-6-deoxy-L-lyxo-4-hexulose to yield dTDP-L-rhamnose. The chain is dTDP-4-dehydrorhamnose reductase from Mycobacterium tuberculosis (strain CDC 1551 / Oshkosh).